The primary structure comprises 590 residues: Guanylate-binding protein 1 (590 aa).

The segment at 1 to 309 is GTPase domain (Globular); sequence MASEIHMTGP…NAISSGDLPC (309 aa). The region spanning 35–276 is the GB1/RHD3-type G domain; sequence TQPVVVVAIV…FCSYIFSNSK (242 aa). GTP contacts are provided by residues 45–52, 67–69, and 97–101; these read GLYRTGKS, LGS, and DTEGL. Ser-156 carries the post-translational modification Phosphoserine. Cys-587 carries the post-translational modification Cysteine methyl ester. Cys-587 carries S-farnesyl cysteine lipidation. Residue Thr-588 is modified to Phosphothreonine. Positions 588–590 are cleaved as a propeptide — removed in mature form; it reads TIS.

The protein belongs to the TRAFAC class dynamin-like GTPase superfamily. GB1/RHD3 GTPase family. GB1 subfamily. Homodimer; homodimerization occurs upon GTP-binding and is required for the second hydrolysis step from GDP to GMP. Undergoes conformational changes and oligomerization upon GTP-binding and hydrolysis. Heterodimer with other family members, including GBP2, GBP3, GBP4 and GBP5. Dimerization regulates subcellular location to membranous structures. Interacts with SQSTM1. Interacts (when phosphorylated) with 14-3-3 protein sigma (SFN); leading to GBP1 retention in the cytosol and inactivation. Post-translationally, isoprenylation is required for proper subcellular location. In terms of processing, phosphorylated at Ser-156 by PIM1 in absence of infection, inhibits GBP1: phosphorylation promotes interaction with 14-3-3 protein sigma (SFN), leading to GBP1 retention in the cytosol. Dephosphorylated in response to infection, liberating GBP1.

Its subcellular location is the cytoplasmic vesicle membrane. It localises to the golgi apparatus membrane. The protein localises to the cell membrane. The protein resides in the cytoplasm. It is found in the cytosol. Its subcellular location is the secreted. The catalysed reaction is GTP + H2O = GDP + phosphate + H(+). It carries out the reaction GDP + H2O = GMP + phosphate + H(+). Functionally, interferon (IFN)-inducible GTPase that plays important roles in innate immunity against a diverse range of bacterial, viral and protozoan pathogens. Hydrolyzes GTP to GMP in two consecutive cleavage reactions: GTP is first hydrolyzed to GDP and then to GMP in a processive manner. Following infection, recruited to the pathogen-containing vacuoles or vacuole-escaped bacteria and promotes both inflammasome assembly and autophagy. Acts as a positive regulator of inflammasome assembly by facilitating the detection of inflammasome ligands from pathogens. Involved in the lysis of pathogen-containing vacuoles, releasing pathogens into the cytosol. Following pathogen release in the cytosol, forms a protein coat in a GTPase-dependent manner that encapsulates pathogens and promotes the detection of ligands by pattern recognition receptors. Plays a key role in inflammasome assembly in response to infection by Gram-negative bacteria: following pathogen release in the cytosol, forms a protein coat that encapsulates Gram-negative bacteria and directly binds to lipopolysaccharide (LPS), disrupting the O-antigen barrier and unmasking lipid A that is that detected by the non-canonical inflammasome effector CASP4/CASP11. Also promotes recruitment of proteins that mediate bacterial cytolysis, leading to release double-stranded DNA (dsDNA) that activates the AIM2 inflammasome. Involved in autophagy by regulating bacteriolytic peptide generation via its interaction with ubiquitin-binding protein SQSTM1, which delivers monoubiquitinated proteins to autolysosomes for the generation of bacteriolytic peptides. Confers protection to several pathogens, including the bacterial pathogens L.monocytogenes and M.bovis BCG as well as the protozoan pathogen T.gondii. Exhibits antiviral activity against influenza virus. The sequence is that of Guanylate-binding protein 1 (GBP1) from Chlorocebus aethiops (Green monkey).